The primary structure comprises 326 residues: o-succinylbenzoate synthase (326 aa).

Lys-110 functions as the Proton donor in the catalytic mechanism. 3 residues coordinate Mg(2+): Asp-138, Glu-165, and Asp-188. Residue Lys-212 is the Proton acceptor of the active site.

The protein belongs to the mandelate racemase/muconate lactonizing enzyme family. MenC type 1 subfamily. It depends on a divalent metal cation as a cofactor.

The catalysed reaction is (1R,6R)-6-hydroxy-2-succinyl-cyclohexa-2,4-diene-1-carboxylate = 2-succinylbenzoate + H2O. The protein operates within quinol/quinone metabolism; 1,4-dihydroxy-2-naphthoate biosynthesis; 1,4-dihydroxy-2-naphthoate from chorismate: step 4/7. It participates in quinol/quinone metabolism; menaquinone biosynthesis. Its function is as follows. Converts 2-succinyl-6-hydroxy-2,4-cyclohexadiene-1-carboxylate (SHCHC) to 2-succinylbenzoate (OSB). In Mycobacterium bovis (strain ATCC BAA-935 / AF2122/97), this protein is o-succinylbenzoate synthase.